An 89-amino-acid chain; its full sequence is UPF0237 protein DIP1286 (89 aa).

The ACT domain occupies 4–78 (IISVTGADHT…KDQNLVIRIQ (75 aa)).

Belongs to the UPF0237 family.

The protein is UPF0237 protein DIP1286 of Corynebacterium diphtheriae (strain ATCC 700971 / NCTC 13129 / Biotype gravis).